A 969-amino-acid chain; its full sequence is Leucine--tRNA ligase (969 aa).

A disordered region spans residues 1-23 (MTESPTTSPATGSGAAAPDSDAP). The 'HIGH' region motif lies at 78–89 (PYPSGEGLHVGH). Residues 737-741 (KIGKS) carry the 'KMSKS' region motif. An ATP-binding site is contributed by Lys-740.

The protein belongs to the class-I aminoacyl-tRNA synthetase family.

The protein resides in the cytoplasm. The catalysed reaction is tRNA(Leu) + L-leucine + ATP = L-leucyl-tRNA(Leu) + AMP + diphosphate. This chain is Leucine--tRNA ligase, found in Mycolicibacterium paratuberculosis (strain ATCC BAA-968 / K-10) (Mycobacterium paratuberculosis).